Consider the following 215-residue polypeptide: Small ribosomal subunit protein eS1 (215 aa).

It belongs to the eukaryotic ribosomal protein eS1 family.

The sequence is that of Small ribosomal subunit protein eS1 from Halorubrum lacusprofundi (strain ATCC 49239 / DSM 5036 / JCM 8891 / ACAM 34).